We begin with the raw amino-acid sequence, 640 residues long: Threonine--tRNA ligase (640 aa).

In terms of domain architecture, TGS spans 1 to 61 (MPIITLPDGS…DRDATLQIIT (61 aa)). A catalytic region spans residues 242–533 (DHRRIGKQLD…LIEHYAGAFP (292 aa)). Residues C333, H384, and H510 each coordinate Zn(2+).

This sequence belongs to the class-II aminoacyl-tRNA synthetase family. As to quaternary structure, homodimer. Requires Zn(2+) as cofactor.

It is found in the cytoplasm. The enzyme catalyses tRNA(Thr) + L-threonine + ATP = L-threonyl-tRNA(Thr) + AMP + diphosphate + H(+). In terms of biological role, catalyzes the attachment of threonine to tRNA(Thr) in a two-step reaction: L-threonine is first activated by ATP to form Thr-AMP and then transferred to the acceptor end of tRNA(Thr). Also edits incorrectly charged L-seryl-tRNA(Thr). The sequence is that of Threonine--tRNA ligase from Pseudomonas aeruginosa (strain LESB58).